Here is a 218-residue protein sequence, read N- to C-terminus: Small ribosomal subunit protein uS3 (218 aa).

A KH type-2 domain is found at 38–107 (VREYIEKRLK…RVHVNVVEVK (70 aa)).

It belongs to the universal ribosomal protein uS3 family. Part of the 30S ribosomal subunit. Forms a tight complex with proteins S10 and S14.

Functionally, binds the lower part of the 30S subunit head. Binds mRNA in the 70S ribosome, positioning it for translation. The sequence is that of Small ribosomal subunit protein uS3 from Exiguobacterium sibiricum (strain DSM 17290 / CCUG 55495 / CIP 109462 / JCM 13490 / 255-15).